Reading from the N-terminus, the 234-residue chain is Large ribosomal subunit protein uL1 (234 aa).

It belongs to the universal ribosomal protein uL1 family. As to quaternary structure, part of the 50S ribosomal subunit.

Its function is as follows. Binds directly to 23S rRNA. The L1 stalk is quite mobile in the ribosome, and is involved in E site tRNA release. In terms of biological role, protein L1 is also a translational repressor protein, it controls the translation of the L11 operon by binding to its mRNA. The polypeptide is Large ribosomal subunit protein uL1 (Helicobacter pylori (strain Shi470)).